Consider the following 494-residue polypeptide: Lipopolysaccharide core galacturonosyltransferase RgtB (494 aa).

The next 10 helical transmembrane spans lie at 9-29 (ISWI…VRLA), 74-94 (LTAL…LYGL), 104-124 (ALVA…FEMQ), 127-147 (LTHT…FIRS), 156-176 (YLIA…FAIL), 197-217 (WRLG…LFWL), 251-271 (LALA…IVFG), 291-311 (MMLV…AAGI), 316-336 (LVPM…AAGV), and 345-365 (FIPV…GSVA).

The protein belongs to the glycosyltransferase 83 family.

It localises to the cell inner membrane. It functions in the pathway bacterial outer membrane biogenesis; LPS core biosynthesis. Functionally, involved in the modification of the lipopolysaccharide (LPS) inner core. Catalyzes the transfer of a galacturonic acid (GalA) residue to the 5-position of the outer Kdo (3-deoxy-D-manno-octulosonic acid) residue of the LPS inner core, using dodecaprenyl phosphate-GalA as the donor substrate. Acts after the other GalA transferase RgtA. The chain is Lipopolysaccharide core galacturonosyltransferase RgtB from Rhizobium johnstonii (strain DSM 114642 / LMG 32736 / 3841) (Rhizobium leguminosarum bv. viciae).